The sequence spans 494 residues: Acetyl-coenzyme A carboxylase carboxyl transferase subunit beta, chloroplastic (494 aa).

In terms of domain architecture, CoA carboxyltransferase N-terminal spans 226–494 (LWVQCENCYG…VPLNQNETEH (269 aa)). 4 residues coordinate Zn(2+): cysteine 230, cysteine 233, cysteine 249, and cysteine 252. The segment at 230–252 (CENCYGLNYKKFLKSKMNICEQC) adopts a C4-type zinc-finger fold.

The protein belongs to the AccD/PCCB family. In terms of assembly, acetyl-CoA carboxylase is a heterohexamer composed of biotin carboxyl carrier protein, biotin carboxylase and 2 subunits each of ACCase subunit alpha and ACCase plastid-coded subunit beta (accD). Requires Zn(2+) as cofactor.

It localises to the plastid. Its subcellular location is the chloroplast stroma. It catalyses the reaction N(6)-carboxybiotinyl-L-lysyl-[protein] + acetyl-CoA = N(6)-biotinyl-L-lysyl-[protein] + malonyl-CoA. The protein operates within lipid metabolism; malonyl-CoA biosynthesis; malonyl-CoA from acetyl-CoA: step 1/1. Functionally, component of the acetyl coenzyme A carboxylase (ACC) complex. Biotin carboxylase (BC) catalyzes the carboxylation of biotin on its carrier protein (BCCP) and then the CO(2) group is transferred by the transcarboxylase to acetyl-CoA to form malonyl-CoA. The polypeptide is Acetyl-coenzyme A carboxylase carboxyl transferase subunit beta, chloroplastic (Coffea arabica (Arabian coffee)).